The following is a 263-amino-acid chain: Oxidoreductase tpcG (263 aa).

The protein belongs to the avfA family. As to expression, specifically expressed in conidia.

The protein operates within secondary metabolite biosynthesis. Functionally, oxidoreductase; part of the gene cluster that mediates the biosynthesis of trypacidin, a mycotoxin with antiprotozoal activity and that plays a role in the infection process. The pathway begins with the synthesis of atrochrysone thioester by the polyketide synthase (PKS) tpcC. The atrochrysone carboxyl ACP thioesterase tpcB then breaks the thioester bond and releases the atrochrysone carboxylic acid from tpcC. The decarboxylase tpcK converts atrochrysone carboxylic acid to atrochrysone which is further reduced into emodin anthrone. The next step is performed by the emodin anthrone oxygenase tpcL that catalyzes the oxidation of emodinanthrone to emodin. Emodin O-methyltransferase encoded by tpcA catalyzes methylation of the 8-hydroxy group of emodin to form questin. Ring cleavage of questin by questin oxidase tpcI leads to desmethylsulochrin via several intermediates including questin epoxide. Another methylation step catalyzed by tpcM leads to the formation of sulochrin which is further converted to monomethylsulfochrin by tpcH. Finally, the tpcJ catalyzes the conversion of monomethylsulfochrin to trypacidin. Trypacidin is toxic for human pulmonary and bronchial epithelial cells by initiating the intracellular formation of nitric oxide (NO) and hydrogen peroxide (H(2)O(2)), thus triggering host necrotic cell death. The trypacidin pathway is also able to produce endocrocin via a distinct route from the endocrocin Enc pathway. In Aspergillus fumigatus (strain ATCC MYA-4609 / CBS 101355 / FGSC A1100 / Af293) (Neosartorya fumigata), this protein is Oxidoreductase tpcG.